A 64-amino-acid chain; its full sequence is Beta-toxin Tf1 (64 aa).

Residues 1 to 62 form the LCN-type CS-alpha/beta domain; it reads KEGYLMDHEG…VWERATNRCG (62 aa). 4 cysteine pairs are disulfide-bonded: C11–C61, C15–C37, C23–C42, and C27–C44. C61 is subject to Cysteine amide.

It belongs to the long (4 C-C) scorpion toxin superfamily. Sodium channel inhibitor family. Beta subfamily. Expressed by the venom gland.

The protein localises to the secreted. Beta toxins bind voltage-independently at site-4 of sodium channels (Nav) and shift the voltage of activation toward more negative potentials thereby affecting sodium channel activation and promoting spontaneous and repetitive firing. This Tityus fasciolatus (Central Brazilian scorpion) protein is Beta-toxin Tf1.